The primary structure comprises 121 residues: Small ribosomal subunit protein uS13 (121 aa).

A disordered region spans residues 93 to 121 (RGLPMRGQRTRTNARTRKGPRKGAAALKK).

Belongs to the universal ribosomal protein uS13 family. Part of the 30S ribosomal subunit. Forms a loose heterodimer with protein S19. Forms two bridges to the 50S subunit in the 70S ribosome.

Its function is as follows. Located at the top of the head of the 30S subunit, it contacts several helices of the 16S rRNA. In the 70S ribosome it contacts the 23S rRNA (bridge B1a) and protein L5 of the 50S subunit (bridge B1b), connecting the 2 subunits; these bridges are implicated in subunit movement. Contacts the tRNAs in the A and P-sites. This is Small ribosomal subunit protein uS13 from Acidovorax ebreus (strain TPSY) (Diaphorobacter sp. (strain TPSY)).